Here is a 228-residue protein sequence, read N- to C-terminus: MLKWIVRGVAALLALFLLYQLWIFGHIVYWKWNNPATTAFMDEQQARLAETNPDAELRYRWVDYGRISPQLKRAIVASEDAKFLQHEGFDWEGIQTAWEKNLQKGRIVAGGSTISQQLAKNLFLSSRRTPWRKAEEALITVMLEAVMDKRRIFEIYLNVIEWGDGVFGAESAARHYYRVPASRLSAGQAAKLAAMVPNPRYYDTHRNDRTLLRKTKIIQRRMNFVAIP.

A helical transmembrane segment spans residues 8-28 (GVAALLALFLLYQLWIFGHIV).

Belongs to the glycosyltransferase 51 family.

The protein resides in the cell inner membrane. It carries out the reaction [GlcNAc-(1-&gt;4)-Mur2Ac(oyl-L-Ala-gamma-D-Glu-L-Lys-D-Ala-D-Ala)](n)-di-trans,octa-cis-undecaprenyl diphosphate + beta-D-GlcNAc-(1-&gt;4)-Mur2Ac(oyl-L-Ala-gamma-D-Glu-L-Lys-D-Ala-D-Ala)-di-trans,octa-cis-undecaprenyl diphosphate = [GlcNAc-(1-&gt;4)-Mur2Ac(oyl-L-Ala-gamma-D-Glu-L-Lys-D-Ala-D-Ala)](n+1)-di-trans,octa-cis-undecaprenyl diphosphate + di-trans,octa-cis-undecaprenyl diphosphate + H(+). It participates in cell wall biogenesis; peptidoglycan biosynthesis. In terms of biological role, peptidoglycan polymerase that catalyzes glycan chain elongation from lipid-linked precursors. In Laribacter hongkongensis (strain HLHK9), this protein is Biosynthetic peptidoglycan transglycosylase.